A 242-amino-acid polypeptide reads, in one-letter code: Glutathione S-transferase 3 (242 aa).

A GST N-terminal domain is found at 1-79 (MIVLHHLKNS…HLVRKYGPSF (79 aa)). Residues 85 to 234 (DVAELEKYEL…ERYSHPPTPP (150 aa)) form the GST C-terminal domain. The residue at position 228 (Ser228) is a Phosphoserine. A Phosphothreonine modification is found at Thr232.

This sequence belongs to the GST superfamily. Interacts with sad1.

The protein localises to the cytoplasm. The enzyme catalyses RX + glutathione = an S-substituted glutathione + a halide anion + H(+). Functionally, may have a role in the detoxification of various heavy metals. The chain is Glutathione S-transferase 3 (gst3) from Schizosaccharomyces pombe (strain 972 / ATCC 24843) (Fission yeast).